We begin with the raw amino-acid sequence, 237 residues long: Concanavalin-A (237 aa).

Positions 8 and 10 each coordinate Mn(2+). Positions 10, 12, 14, and 19 each coordinate Ca(2+). Asn-14 is a binding site for a carbohydrate. Asp-19 and His-24 together coordinate Mn(2+). Residues 98–100, Asp-208, and Arg-228 each bind a carbohydrate; that span reads GLY.

It belongs to the leguminous lectin family. As to quaternary structure, homotetramer. Post-translationally, concanavalin A-like lectins of the Diocleinae subtribe undergo proteolytic processing referred to as circular permutation. The propeptide is split into an N-terminal and a C-terminal part, the gamma and beta chain, respectively. These are then religated in beta-gamma order to form the mature alpha chain. The beta and gamma chains can often be detected in cell extracts. Residues 1-118 of the mature chain, as displayed here, probably constitute the beta chain in the propeptide, residues 119-237 the gamma chain.

Glucose/D-mannose specific lectin. The protein is Concanavalin-A of Canavalia cathartica (Jackbean).